The following is a 149-amino-acid chain: Ribonuclease-like 3 (149 aa).

Positions 1 to 22 (MGIHQCTAVVLLLLCASLSTYG) are cleaved as a signal peptide. Q23 carries the post-translational modification Pyrrolidone carboxylic acid. The Proton acceptor role is filled by H38. Cystine bridges form between C48–C109, C66–C120, and C84–C135. Position 67-71 (67-71 (KEVNT)) interacts with substrate. The active-site Proton donor is H142.

The protein belongs to the pancreatic ribonuclease family. In terms of processing, cleavage between Arg-55 and Arg-56 is catalyzed by a membrane-localized Gram-negative bacterium protease (OmpT in E.coli). The excised fragment is then transported to the bacterium cytosol for cleavage of the disulfide bridge linking Cys-48 and Cys-109, thus separating the N-terminal and LF-ZF3. LF-ZF3 but not the N-terminal peptide possesses bactericidal activity. As to expression, strongly expressed in the adult liver and gut, and weakly in the heart and testis.

Its subcellular location is the secreted. Its function is as follows. Ribonuclease. Angiogenic. Plays a role in host defense. Exhibits strong antibacterial activity against Gram-negative bacteria but mild antibacterial activity against Gram-positive bacteria. The RNase activity is not required for the bactericidal activity. This is Ribonuclease-like 3 from Danio rerio (Zebrafish).